A 235-amino-acid chain; its full sequence is DUP240 protein DFP4 (235 aa).

The Cytoplasmic portion of the chain corresponds to 1-44; sequence MSSELLISNSKPRPEGLRKLCEGETVILPRDITPSKCAYFLKQN. The chain crosses the membrane as a helical span at residues 45–65; it reads IVFISYIFIHIIITIILNRLA. Over 66–72 the chain is Extracellular; the sequence is LSAHGNT. A helical transmembrane segment spans residues 73 to 93; that stretch reads LIIILAALLITISLFLLLLLP. The Cytoplasmic segment spans residues 94-235; that stretch reads YLSCSRYKLR…DKYPEMGVTV (142 aa).

The protein belongs to the DUP/COS family. In terms of assembly, interacts according to large scale protein interaction studies with BZZ1, SRB4 and SUA7.

It is found in the cell membrane. This chain is DUP240 protein DFP4, found in Saccharomyces cerevisiae (strain ATCC 204508 / S288c) (Baker's yeast).